Consider the following 948-residue polypeptide: Receptor-like protein 45 (948 aa).

The first 26 residues, 1–26 (MSSSKLMDFGLTWIIMMMILLQGCRS), serve as a signal peptide directing secretion. The Extracellular portion of the chain corresponds to 27–897 (CIESERQGLL…EDDDESGLLD (871 aa)). 2 N-linked (GlcNAc...) asparagine glycosylation sites follow: Asn-99 and Asn-113. 2 LRR repeats span residues 106 to 129 (FEEL…RKGG) and 135 to 162 (LRNL…AVSL). An LRR 3; degenerate repeat occupies 163–183 (KTLILHDNLFKGGFPVQELIN). Asn-183 carries an N-linked (GlcNAc...) asparagine glycan. LRR repeat units follow at residues 184 to 208 (LTSL…ELTN), 210 to 233 (RNLR…GICR), 234 to 257 (LEQL…CFSR), 258 to 284 (FSKL…DFKS), 286 to 306 (EYLS…LITE), 307 to 332 (LTEL…VSGG), 334 to 357 (QSQL…LWYQ), 358 to 381 (QELR…LLEN), 382 to 404 (NTEL…PRTM), 405 to 429 (RRLQ…GLIL), 430 to 453 (ASLR…MARM), 454 to 477 (ENIE…LFTG), 479 to 502 (YSLS…SSDE), 503 to 526 (TSLI…LLNL), 527 to 549 (RMLS…WLGN), 550 to 573 (FFLE…LFNI), 575 to 595 (YLWL…LRSS), 596 to 618 (SDYG…DTLW), 619 to 640 (YGLR…LFRS), 642 to 665 (PSIS…LCGL), 666 to 689 (SNVR…VTNL), 758 to 782 (LNQM…LGDL), 783 to 805 (KRVR…SFSN), 807 to 831 (RSIE…TLLQ), and 833 to 855 (LVVF…QFNT). Residue Asn-328 is glycosylated (N-linked (GlcNAc...) asparagine). N-linked (GlcNAc...) asparagine glycans are attached at residues Asn-381 and Asn-392. Residues Asn-436 and Asn-465 are each glycosylated (N-linked (GlcNAc...) asparagine). An N-linked (GlcNAc...) asparagine glycan is attached at Asn-608. 3 N-linked (GlcNAc...) asparagine glycosylation sites follow: Asn-653, Asn-679, and Asn-688. Residue Asn-789 is glycosylated (N-linked (GlcNAc...) asparagine). Asn-837 and Asn-842 each carry an N-linked (GlcNAc...) asparagine glycan. A helical transmembrane segment spans residues 898 to 918 (IVVLWWSLGTTYVTVMMGFLV). Residues 919–948 (FLCFDSPWRRAWFCLVDTFIDRVKDVLGVI) lie on the Cytoplasmic side of the membrane.

It belongs to the RLP family.

It is found in the cell membrane. The chain is Receptor-like protein 45 from Arabidopsis thaliana (Mouse-ear cress).